The sequence spans 328 residues: DNA-directed RNA polymerase subunit alpha (328 aa).

Positions 1–231 (MIYQMQMPER…EHVSLFANFS (231 aa)) are alpha N-terminal domain (alpha-NTD). Positions 252 to 328 (MRKLLQTRIE…MDITKYQMKS (77 aa)) are alpha C-terminal domain (alpha-CTD).

The protein belongs to the RNA polymerase alpha chain family. As to quaternary structure, homodimer. The RNAP catalytic core consists of 2 alpha, 1 beta, 1 beta' and 1 omega subunit. When a sigma factor is associated with the core the holoenzyme is formed, which can initiate transcription.

It carries out the reaction RNA(n) + a ribonucleoside 5'-triphosphate = RNA(n+1) + diphosphate. In terms of biological role, DNA-dependent RNA polymerase catalyzes the transcription of DNA into RNA using the four ribonucleoside triphosphates as substrates. This chain is DNA-directed RNA polymerase subunit alpha, found in Prosthecochloris aestuarii (strain DSM 271 / SK 413).